A 582-amino-acid polypeptide reads, in one-letter code: Zinc finger protein 319 (582 aa).

Positions 1–14 (MSESWQQPPQTQPQ) are enriched in low complexity. The segment at 1 to 39 (MSESWQQPPQTQPQQPQPPQPQHHAEPPPALAEHTLPPG) is disordered. The segment at 76-100 (PKCGVCGHDLAHLSSPHEHQCLAGH) adopts a C2H2-type 1 zinc-finger fold. The C2H2-type 2; degenerate zinc-finger motif lies at 104–126 (FQCTQCLKIFHQATDLLEHQCVQ). A Glycyl lysine isopeptide (Lys-Gly) (interchain with G-Cter in SUMO2) cross-link involves residue lysine 130. The C2H2-type 3 zinc-finger motif lies at 132–154 (FVCGVCKMGFSLLTSLAQHHSSH). The segment covering 174 to 196 (EPATTAAPSLPAAPAPSTVTPAE) has biased composition (low complexity). The disordered stretch occupies residues 174–198 (EPATTAAPSLPAAPAPSTVTPAEQA). 3 C2H2-type zinc fingers span residues 202–224 (YSCP…ERIH), 230–252 (YKCT…KRTH), and 258–280 (YKCA…MYAH). A Phosphoserine modification is found at serine 281. The C2H2-type 7; degenerate zinc finger occupies 287-309 (FRCNVCELHFKESSELLQHPCTP). 3 consecutive C2H2-type zinc fingers follow at residues 315 to 337 (FRCG…ERTH), 343 to 365 (FKCD…RRTH), and 371 to 393 (FKCG…QHVH). The C2H2-type 11; degenerate zinc-finger motif lies at 399–421 (FKCPVCQKGFDQSAELLRHKCLP). The C2H2-type 12 zinc-finger motif lies at 428–450 (FKCPVCNKAYKRASALQKHQLAH). Residues 458-480 (LRCTLCERRFFSSSEFVQHRCDP) form a C2H2-type 13; degenerate zinc finger. C2H2-type zinc fingers lie at residues 486–508 (LKCP…RRVH), 514–536 (YKCP…QGVH), and 542–564 (FKCV…SAQH).

The protein belongs to the krueppel C2H2-type zinc-finger protein family.

It localises to the nucleus. In terms of biological role, may be involved in transcriptional regulation. The chain is Zinc finger protein 319 (ZNF319) from Homo sapiens (Human).